We begin with the raw amino-acid sequence, 25 residues long: Ocellatin-1 (25 aa).

Position 25 is a valine amide (valine 25).

As to expression, expressed by the skin dorsal glands.

Its subcellular location is the secreted. Functionally, has hemolytic activity against human erythrocytes and antibacterial activity against the Gram-negative bacterium E.coli. The chain is Ocellatin-1 from Leptodactylus ocellatus (Argus frog).